The primary structure comprises 260 residues: Putative ABC transporter ATP-binding protein PF0068 (260 aa).

The ABC transporter domain maps to 2 to 234; that stretch reads IEVKGVWFWY…DLKRYKLEEP (233 aa). ATP is bound at residue 34-41; the sequence is GPNGSGKT.

This sequence belongs to the ABC transporter superfamily.

The protein resides in the cell membrane. Functionally, probably part of an ABC transporter complex. Responsible for energy coupling to the transport system. This chain is Putative ABC transporter ATP-binding protein PF0068, found in Pyrococcus furiosus (strain ATCC 43587 / DSM 3638 / JCM 8422 / Vc1).